A 409-amino-acid chain; its full sequence is Lipoyl synthase, mitochondrial (409 aa).

The interval 21–41 (QQQVPPSEEPRNESGAANPPL) is disordered. [4Fe-4S] cluster-binding residues include Cys125, Cys130, Cys136, Cys159, Cys163, Cys166, and Ser375. Positions 142–364 (EEGDGTATAT…EKEALDMGFL (223 aa)) constitute a Radical SAM core domain.

Belongs to the radical SAM superfamily. Lipoyl synthase family. [4Fe-4S] cluster is required as a cofactor.

It localises to the mitochondrion. It catalyses the reaction [[Fe-S] cluster scaffold protein carrying a second [4Fe-4S](2+) cluster] + N(6)-octanoyl-L-lysyl-[protein] + 2 oxidized [2Fe-2S]-[ferredoxin] + 2 S-adenosyl-L-methionine + 4 H(+) = [[Fe-S] cluster scaffold protein] + N(6)-[(R)-dihydrolipoyl]-L-lysyl-[protein] + 4 Fe(3+) + 2 hydrogen sulfide + 2 5'-deoxyadenosine + 2 L-methionine + 2 reduced [2Fe-2S]-[ferredoxin]. The protein operates within protein modification; protein lipoylation via endogenous pathway; protein N(6)-(lipoyl)lysine from octanoyl-[acyl-carrier-protein]: step 2/2. Its function is as follows. Catalyzes the radical-mediated insertion of two sulfur atoms into the C-6 and C-8 positions of the octanoyl moiety bound to the lipoyl domains of lipoate-dependent enzymes, thereby converting the octanoylated domains into lipoylated derivatives. The protein is Lipoyl synthase, mitochondrial of Trypanosoma brucei gambiense (strain MHOM/CI/86/DAL972).